The primary structure comprises 795 residues: Mitochondrial intermediate peptidase (795 aa).

Residues 1-22 (MLKTLNRRSWTCRQCIRILRRN) constitute a mitochondrion transit peptide. A Zn(2+)-binding site is contributed by H561. The active site involves E562. Zn(2+)-binding residues include H565 and H568.

This sequence belongs to the peptidase M3 family. Zn(2+) is required as a cofactor.

Its subcellular location is the mitochondrion matrix. The catalysed reaction is Release of an N-terminal octapeptide as second stage of processing of some proteins imported into the mitochondrion.. Functionally, cleaves proteins, imported into the mitochondrion, to their mature size. While most mitochondrial precursor proteins are processed to the mature form in one step by mitochondrial processing peptidase (MPP), the sequential cleavage by MIP of an octapeptide after initial processing by MPP is a required step for a subgroup of nuclear-encoded precursor proteins destined for the matrix or the inner membrane. This chain is Mitochondrial intermediate peptidase (OCT1), found in Coccidioides immitis (strain RS) (Valley fever fungus).